We begin with the raw amino-acid sequence, 515 residues long: Na(+)/H(+) antiporter NhaB (515 aa).

The next 11 membrane-spanning stretches (helical) occupy residues 23–43 (LAIIIFLIINPLIFFFINPFV), 45–65 (GWLLVIEFIFTLAMALKCYPL), 96–116 (VVLLLIFMVAGIYFMKQLLLF), 136–156 (CLASAFLSAFLDALTVIAVVI), 204–224 (LMMHAGVGTALGGVMTMVGEP), 245–265 (APITLPVFICGLLVCFLVEHF), 305–325 (ALIGIWLIVALAFHLAEVGLI), 349–369 (FEEALPFTALLTVFFSIVAVI), 393–413 (LFYLFNGLLSSVSDNVFVGTV), 449–469 (ATPNGQAAFLFLLTSTLSPLI), and 480–500 (ALPYTIVMTLVGLLCVEFLLI).

This sequence belongs to the NhaB Na(+)/H(+) (TC 2.A.34) antiporter family.

It localises to the cell inner membrane. The enzyme catalyses 2 Na(+)(in) + 3 H(+)(out) = 2 Na(+)(out) + 3 H(+)(in). Functionally, na(+)/H(+) antiporter that extrudes sodium in exchange for external protons. The polypeptide is Na(+)/H(+) antiporter NhaB (Photorhabdus laumondii subsp. laumondii (strain DSM 15139 / CIP 105565 / TT01) (Photorhabdus luminescens subsp. laumondii)).